The primary structure comprises 126 residues: Large ribosomal subunit protein bL17 (126 aa).

The protein belongs to the bacterial ribosomal protein bL17 family. As to quaternary structure, part of the 50S ribosomal subunit. Contacts protein L32.

The protein is Large ribosomal subunit protein bL17 of Limosilactobacillus fermentum (strain NBRC 3956 / LMG 18251) (Lactobacillus fermentum).